A 178-amino-acid polypeptide reads, in one-letter code: ATP-dependent protease subunit HslV (178 aa).

Threonine 7 is a catalytic residue. Positions 162, 165, and 168 each coordinate Na(+).

Belongs to the peptidase T1B family. HslV subfamily. In terms of assembly, a double ring-shaped homohexamer of HslV is capped on each side by a ring-shaped HslU homohexamer. The assembly of the HslU/HslV complex is dependent on binding of ATP.

It localises to the cytoplasm. The catalysed reaction is ATP-dependent cleavage of peptide bonds with broad specificity.. Allosterically activated by HslU binding. Functionally, protease subunit of a proteasome-like degradation complex believed to be a general protein degrading machinery. This chain is ATP-dependent protease subunit HslV, found in Leptothrix cholodnii (strain ATCC 51168 / LMG 8142 / SP-6) (Leptothrix discophora (strain SP-6)).